We begin with the raw amino-acid sequence, 562 residues long: Apical membrane antigen 1 (562 aa).

Positions 1-21 (MNKIYCILFLSAQCLVHMGKC) are cleaved as a signal peptide. The Extracellular segment spans residues 22-484 (EPNQKPSRLT…QYAQGESKNQ (463 aa)). Residues N84 and N176 are each glycosylated (N-linked (GlcNAc...) asparagine). Cystine bridges form between C94–C247, C162–C192, C208–C220, C265–C363, C282–C354, C388–C444, C432–C449, and C434–C451. The N-linked (GlcNAc...) asparagine glycan is linked to N226. N405 and N441 each carry an N-linked (GlcNAc...) asparagine glycan. A helical membrane pass occupies residues 485–507 (MLLIIIGITGGVCVVALASMFYF). The Cytoplasmic portion of the chain corresponds to 508–562 (RKKAHNDKYDKMEQADGYGKPTTRKDEMLDPEASFWGEEKRASHTTPVLMEKPYY). The tract at residues 519–543 (MEQADGYGKPTTRKDEMLDPEASFW) is disordered.

This sequence belongs to the apicomplexan parasites AMA1 family.

The protein resides in the membrane. Involved in parasite invasion of erythrocytes. This chain is Apical membrane antigen 1 (AMA-1), found in Plasmodium fragile.